Here is a 143-residue protein sequence, read N- to C-terminus: Transcription antitermination protein NusB (143 aa).

Belongs to the NusB family.

Its function is as follows. Involved in transcription antitermination. Required for transcription of ribosomal RNA (rRNA) genes. Binds specifically to the boxA antiterminator sequence of the ribosomal RNA (rrn) operons. The protein is Transcription antitermination protein NusB of Mannheimia succiniciproducens (strain KCTC 0769BP / MBEL55E).